The chain runs to 105 residues: uncharacterized protein (105 aa).

In terms of domain architecture, Cupin type-2 spans leucine 33–phenylalanine 100.

This is an uncharacterized protein from Streptomyces coelicolor (strain ATCC BAA-471 / A3(2) / M145).